Here is a 90-residue protein sequence, read N- to C-terminus: MARTVHCIKLNKEAEGLDFPPLPGELGKKIWQSVSKEAWAGWLKHQTMLINENRLNMADARARQYLLKQTEKYFFGEGADQAQGYVPPQS.

It belongs to the Fe(2+)-trafficking protein family.

In terms of biological role, could be a mediator in iron transactions between iron acquisition and iron-requiring processes, such as synthesis and/or repair of Fe-S clusters in biosynthetic enzymes. The protein is Probable Fe(2+)-trafficking protein of Cupriavidus taiwanensis (strain DSM 17343 / BCRC 17206 / CCUG 44338 / CIP 107171 / LMG 19424 / R1) (Ralstonia taiwanensis (strain LMG 19424)).